The primary structure comprises 497 residues: MTKHIIVIGGGLGGISAAIRMAQSGYSVSLYEQNTHIGGKVNRHESDGFGFDLGPSILTMPYIFEKLFEYSKKQMSDYVTIKRLPHQWRSFFPDGTTIDLYEGIKETGQHNAILSKQDIEELQNYLNYTRRIDRITEKGYFNYGLDTLSQIIKFHGPLNALINYDYVHTMQQAIDKRISNPYLRQMLGYFIKYVGSSSYDAPAVLSMLFHMQQEQGLWYVEGGIHHLANALEKLAREEGVTIHTGARVDNIKTYQRRVTGVRLDTGEFVKADYIISNMEVIPTYKYLIHLDTQRLNKLEREFEPASSGYVMHLGVACQYPQLAHHNFFFTENAYLNYQQVFHEKVLPDDPTIYLVNTNKTDHTQAPVGYENIKVLPHIPYIQDQPFTTEDYAKFRDKILDKLEKMGLTDLRKHIIYEDVWTPEDIEKNYRSNRGAIYGVVADKKKNKGFKFPKESQYFENLYFVGGSVNPGGGMPMVTLSGQQVADKINAREAKNRK.

Val-7–Ile-19 provides a ligand contact to FAD.

Belongs to the carotenoid/retinoid oxidoreductase family. CrtP subfamily. Requires FAD as cofactor.

It carries out the reaction all-trans-4,4'-diaponeurosporene + 2 AH2 + 2 O2 = 4,4'-diaponeurosporenal + 2 A + 3 H2O. Its pathway is carotenoid biosynthesis; staphyloxanthin biosynthesis; staphyloxanthin from farnesyl diphosphate: step 3/5. Functionally, involved in the biosynthesis of the yellow-orange carotenoid staphyloxanthin, which plays a role in the virulence via its protective function against oxidative stress. Catalyzes the oxidation of the terminal methyl side group of 4,4'-diaponeurosporene to form 4,4'-diaponeurosporen-4-al. The C40 carotenoid lycopene is a poor substrate. The sequence is that of 4,4'-diaponeurosporene oxygenase from Staphylococcus aureus (strain Mu50 / ATCC 700699).